The sequence spans 335 residues: Large ribosomal subunit protein uL10 (335 aa).

Residues 304-335 form a disordered region; that stretch reads GAAAPVEEAPVEEKKEEKKEEAAAPAGLGMLF. The span at 314–325 shows a compositional bias: basic and acidic residues; sequence VEEKKEEKKEEA.

The protein belongs to the universal ribosomal protein uL10 family. Part of the 50S ribosomal subunit. Homodimer, it forms part of the ribosomal stalk which helps the ribosome interact with GTP-bound translation factors. Forms both a pentameric L10(L12)2(L12)2 and heptameric L10(L12)2(L12)2(L12)2 complex, where L10 forms an elongated spine to which the L12 dimers bind in a sequential fashion. The proportion of heptameric complexes increases during cell growth.

Forms part of the ribosomal stalk, playing a central role in the interaction of the ribosome with GTP-bound translation factors. The chain is Large ribosomal subunit protein uL10 from Methanococcus maripaludis (strain DSM 14266 / JCM 13030 / NBRC 101832 / S2 / LL).